We begin with the raw amino-acid sequence, 471 residues long: Acetylcholinesterase collagenic tail peptide (471 aa).

Residues 1-30 form the signal peptide; the sequence is MLGILLQKATATLASGLNSSRAGMFPIALG. Positions 70 to 86 are PRAD; that stretch reads CCLLTPPPPPMFPPPFF. Collagen-like domains follow at residues 118-282 and 293-307; these read GPPG…SGLP and GPKG…VGRC. 2 disordered regions span residues 140-205 and 237-267; these read EIGE…GEKG and KGVS…IGPP. Low complexity-rich tracts occupy residues 155 to 164 and 242 to 251; these read VRGPRGMPGS and APGHRGPVGR. A run of 2 repeats spans residues 388 to 413 and 420 to 443. The 2 X 26 AA approximate repeats stretch occupies residues 388-443; it reads FCGDEIVQVENGEECDDGNRIVTDSCINCKQAYCGDGYLQSGLEECDGKDFGYHTC.

The protein belongs to the COLQ family. In terms of assembly, the asymmetric form of AChE is a disulfide-bonded oligomer composed of a collagenic subunit (Q) and a variable number of asymmetric (T) catalytic subunits. The N-terminal of the collagenic subunit (Q) associates with the C-terminal of the catalytic subunit (T). Expressed in electric organs but not in muscle.

It is found in the synapse. Its function is as follows. Anchors the catalytic subunits of asymmetric AChE to the synaptic basal lamina. The polypeptide is Acetylcholinesterase collagenic tail peptide (Torpedo marmorata (Marbled electric ray)).